A 166-amino-acid polypeptide reads, in one-letter code: Co-chaperone protein HscB homolog (166 aa).

In terms of domain architecture, J spans 3 to 75; sequence QYFTLFRIEP…IDRAAYLLKT (73 aa).

This sequence belongs to the HscB family. As to quaternary structure, interacts with HscA and stimulates its ATPase activity.

Its function is as follows. Co-chaperone involved in the maturation of iron-sulfur cluster-containing proteins. Seems to help targeting proteins to be folded toward HscA. In Neisseria meningitidis serogroup C (strain 053442), this protein is Co-chaperone protein HscB homolog.